Reading from the N-terminus, the 100-residue chain is Protein RnfH (100 aa).

Belongs to the UPF0125 (RnfH) family.

This is Protein RnfH from Pseudomonas paraeruginosa (strain DSM 24068 / PA7) (Pseudomonas aeruginosa (strain PA7)).